We begin with the raw amino-acid sequence, 181 residues long: Inner membrane-spanning protein YciB (181 aa).

Transmembrane regions (helical) follow at residues 10 to 30 (LVIFFAVYKFFDIYIASGALI), 50 to 70 (MHLITFAMVTVFGTLTLVFHD), 80 to 100 (IIYSLFAIALGVSQLLNKSIL), 118 to 138 (VTWYWVVFFASCGLVNIYVAF), and 148 to 168 (FKVFGLTALTLINTVLTVFYL).

Belongs to the YciB family.

Its subcellular location is the cell inner membrane. Functionally, plays a role in cell envelope biogenesis, maintenance of cell envelope integrity and membrane homeostasis. The polypeptide is Inner membrane-spanning protein YciB (Shewanella baltica (strain OS223)).